Consider the following 209-residue polypeptide: Orotate phosphoribosyltransferase (209 aa).

5-phospho-alpha-D-ribose 1-diphosphate is bound by residues Arg96, Lys100, His102, and 122 to 130 (EDLISTGGS). Position 126 (Ser126) interacts with orotate.

The protein belongs to the purine/pyrimidine phosphoribosyltransferase family. PyrE subfamily. Homodimer. Mg(2+) serves as cofactor.

The catalysed reaction is orotidine 5'-phosphate + diphosphate = orotate + 5-phospho-alpha-D-ribose 1-diphosphate. The protein operates within pyrimidine metabolism; UMP biosynthesis via de novo pathway; UMP from orotate: step 1/2. Catalyzes the transfer of a ribosyl phosphate group from 5-phosphoribose 1-diphosphate to orotate, leading to the formation of orotidine monophosphate (OMP). The protein is Orotate phosphoribosyltransferase of Cytophaga hutchinsonii (strain ATCC 33406 / DSM 1761 / CIP 103989 / NBRC 15051 / NCIMB 9469 / D465).